We begin with the raw amino-acid sequence, 777 residues long: 5-methyltetrahydropteroyltriglutamate--homocysteine methyltransferase (777 aa).

5-methyltetrahydropteroyltri-L-glutamate is bound by residues Arg17–Lys20 and Lys132. L-homocysteine-binding positions include Ile455 to Ser457 and Glu508. Residues Ile455–Ser457 and Glu508 each bind L-methionine. Residues Arg539–Cys540 and Trp585 each bind 5-methyltetrahydropteroyltri-L-glutamate. Residue Asp623 participates in L-homocysteine binding. Position 623 (Asp623) interacts with L-methionine. Glu629 contacts 5-methyltetrahydropteroyltri-L-glutamate. Zn(2+) contacts are provided by His665, Cys667, and Glu689. The active-site Proton donor is the His718. Cys750 lines the Zn(2+) pocket.

The protein belongs to the vitamin-B12 independent methionine synthase family. Requires Zn(2+) as cofactor.

The catalysed reaction is 5-methyltetrahydropteroyltri-L-glutamate + L-homocysteine = tetrahydropteroyltri-L-glutamate + L-methionine. Its pathway is amino-acid biosynthesis; L-methionine biosynthesis via de novo pathway; L-methionine from L-homocysteine (MetE route): step 1/1. Functionally, catalyzes the transfer of a methyl group from 5-methyltetrahydrofolate to homocysteine resulting in methionine formation. The chain is 5-methyltetrahydropteroyltriglutamate--homocysteine methyltransferase from Caulobacter vibrioides (strain ATCC 19089 / CIP 103742 / CB 15) (Caulobacter crescentus).